A 247-amino-acid polypeptide reads, in one-letter code: MKIVGVIPARFGSTRFPGKPLVNLKGRPLIQWTVEGAKKSKLLSEVIVATDHEGIKAAAEAVGVKVVMTDSDLPTGSDRINAAIKDVACDVVVNIQGDEPLVTGELIDRLAQVFVDDPKMDMATLAHPISAEELQSMNSVKVVVNCRDEALYFSRYPMPYSRMSAQEAGSMDGCLKHIGMYAYSRNFLKQFCEAPPALIEKAESLEQLRALYLGAKIKVIRVKEASVGVDTPEDLARLEKLLSSQGM.

The protein belongs to the KdsB family.

The protein resides in the cytoplasm. It catalyses the reaction 3-deoxy-alpha-D-manno-oct-2-ulosonate + CTP = CMP-3-deoxy-beta-D-manno-octulosonate + diphosphate. It participates in nucleotide-sugar biosynthesis; CMP-3-deoxy-D-manno-octulosonate biosynthesis; CMP-3-deoxy-D-manno-octulosonate from 3-deoxy-D-manno-octulosonate and CTP: step 1/1. The protein operates within bacterial outer membrane biogenesis; lipopolysaccharide biosynthesis. Activates KDO (a required 8-carbon sugar) for incorporation into bacterial lipopolysaccharide in Gram-negative bacteria. The chain is 3-deoxy-manno-octulosonate cytidylyltransferase from Bdellovibrio bacteriovorus (strain ATCC 15356 / DSM 50701 / NCIMB 9529 / HD100).